The chain runs to 236 residues: OPEP-2 protein (236 aa).

This chain is OPEP-2 protein (OPEP-2), found in Orgyia pseudotsugata (Douglas-fir tussock moth).